The sequence spans 141 residues: Hemoglobin subunit alpha (141 aa).

One can recognise a Globin domain in the interval 1-141 (VLSDKDKTNV…VSTVLTSKYR (141 aa)). The residue at position 3 (serine 3) is a Phosphoserine. Position 7 is an N6-succinyllysine (lysine 7). Threonine 8 carries the post-translational modification Phosphothreonine. At lysine 11 the chain carries N6-succinyllysine. Lysine 16 is modified (N6-acetyllysine; alternate). The residue at position 16 (lysine 16) is an N6-succinyllysine; alternate. Tyrosine 24 is modified (phosphotyrosine). A Phosphoserine modification is found at serine 35. An N6-succinyllysine modification is found at lysine 40. The residue at position 49 (serine 49) is a Phosphoserine. Histidine 58 is a binding site for O2. Histidine 87 provides a ligand contact to heme b. At serine 102 the chain carries Phosphoserine. Residue threonine 108 is modified to Phosphothreonine. Serine 124 is modified (phosphoserine). 2 positions are modified to phosphothreonine: threonine 134 and threonine 137. At serine 138 the chain carries Phosphoserine.

Belongs to the globin family. As to quaternary structure, heterotetramer of two alpha chains and two beta chains. As to expression, red blood cells.

Its function is as follows. Involved in oxygen transport from the lung to the various peripheral tissues. In terms of biological role, hemopressin acts as an antagonist peptide of the cannabinoid receptor CNR1. Hemopressin-binding efficiently blocks cannabinoid receptor CNR1 and subsequent signaling. The chain is Hemoglobin subunit alpha (HBA) from Elephas maximus (Indian elephant).